The primary structure comprises 744 residues: Putative pre-mRNA-splicing factor ATP-dependent RNA helicase DHX32 (744 aa).

Position 1 is an N-acetylmethionine (methionine 1). Residues 1 to 28 are disordered; the sequence is MDEEELDHPNASPEKRYFPESLDSSDGD. The 199-residue stretch at 72 to 270 folds into the Helicase ATP-binding domain; the sequence is MESLLQNQVV…RLIFEIHRSG (199 aa). 85–92 provides a ligand contact to ATP; sequence GDSKCGKS. The DEAH box motif lies at 185-188; sequence DDVH. The 181-residue stretch at 258 to 438 folds into the Helicase C-terminal domain; sequence SVIRLIFEIH…SMVLFMKRVD (181 aa).

It belongs to the DEAD box helicase family. DEAH subfamily.

The protein localises to the nucleus. Its subcellular location is the mitochondrion. It carries out the reaction ATP + H2O = ADP + phosphate + H(+). This Mus musculus (Mouse) protein is Putative pre-mRNA-splicing factor ATP-dependent RNA helicase DHX32 (Dhx32).